The sequence spans 356 residues: tRNA (guanine(26)-N(2))-dimethyltransferase (356 aa).

Positions 5–352 (VLRREGTVEF…VSAGEVERVL (348 aa)) constitute a Trm1 methyltransferase domain. S-adenosyl-L-methionine is bound by residues Arg-40, Arg-67, Asp-85, Asp-111, and Ala-112.

The protein belongs to the class I-like SAM-binding methyltransferase superfamily. Trm1 family.

The catalysed reaction is guanosine(26) in tRNA + 2 S-adenosyl-L-methionine = N(2)-dimethylguanosine(26) in tRNA + 2 S-adenosyl-L-homocysteine + 2 H(+). In terms of biological role, dimethylates a single guanine residue at position 26 of a number of tRNAs using S-adenosyl-L-methionine as donor of the methyl groups. The chain is tRNA (guanine(26)-N(2))-dimethyltransferase from Pyrobaculum arsenaticum (strain DSM 13514 / JCM 11321 / PZ6).